A 174-amino-acid chain; its full sequence is Co-chaperone protein HscB (174 aa).

A J domain is found at 2–74 (NYFALFDLPR…LNRAIYFLCL (73 aa)).

This sequence belongs to the HscB family. In terms of assembly, interacts with HscA and stimulates its ATPase activity. Interacts with IscU.

In terms of biological role, co-chaperone involved in the maturation of iron-sulfur cluster-containing proteins. Seems to help targeting proteins to be folded toward HscA. The sequence is that of Co-chaperone protein HscB from Buchnera aphidicola subsp. Acyrthosiphon pisum (strain 5A).